Reading from the N-terminus, the 365-residue chain is Probable dual-specificity RNA methyltransferase RlmN (365 aa).

Glu106 (proton acceptor) is an active-site residue. The Radical SAM core domain occupies 112–352 (YPDRVTLCVS…VTVRDTRGRE (241 aa)). An intrachain disulfide couples Cys119 to Cys357. Cys126, Cys130, and Cys133 together coordinate [4Fe-4S] cluster. Residues 181 to 182 (GE), Ser215, 238 to 240 (SLH), and Asn314 each bind S-adenosyl-L-methionine. Cys357 (S-methylcysteine intermediate) is an active-site residue.

This sequence belongs to the radical SAM superfamily. RlmN family. The cofactor is [4Fe-4S] cluster.

It is found in the cytoplasm. The catalysed reaction is adenosine(2503) in 23S rRNA + 2 reduced [2Fe-2S]-[ferredoxin] + 2 S-adenosyl-L-methionine = 2-methyladenosine(2503) in 23S rRNA + 5'-deoxyadenosine + L-methionine + 2 oxidized [2Fe-2S]-[ferredoxin] + S-adenosyl-L-homocysteine. It catalyses the reaction adenosine(37) in tRNA + 2 reduced [2Fe-2S]-[ferredoxin] + 2 S-adenosyl-L-methionine = 2-methyladenosine(37) in tRNA + 5'-deoxyadenosine + L-methionine + 2 oxidized [2Fe-2S]-[ferredoxin] + S-adenosyl-L-homocysteine. Functionally, specifically methylates position 2 of adenine 2503 in 23S rRNA and position 2 of adenine 37 in tRNAs. This Thermobifida fusca (strain YX) protein is Probable dual-specificity RNA methyltransferase RlmN.